We begin with the raw amino-acid sequence, 369 residues long: Deoxyuridine 5'-triphosphate nucleotidohydrolase (369 aa).

Substrate contacts are provided by residues 258-260 (RSS) and 364-365 (FG).

This sequence belongs to the dUTPase family. Requires Mg(2+) as cofactor.

The catalysed reaction is dUTP + H2O = dUMP + diphosphate + H(+). Functionally, involved in nucleotide metabolism: produces dUMP, the immediate precursor of thymidine nucleotides and decreases the intracellular concentration of dUTP to avoid uracil incorporation into viral DNA. The protein is Deoxyuridine 5'-triphosphate nucleotidohydrolase of Homo sapiens (Human).